Consider the following 148-residue polypeptide: Ribonuclease H (148 aa).

One can recognise an RNase H type-1 domain in the interval Asp3–Ala144. Positions 12, 50, 72, and 136 each coordinate Mg(2+). The segment at Gly125–Arg148 is disordered.

This sequence belongs to the RNase H family. In terms of assembly, monomer. Requires Mg(2+) as cofactor.

Its subcellular location is the cytoplasm. The catalysed reaction is Endonucleolytic cleavage to 5'-phosphomonoester.. Endonuclease that specifically degrades the RNA of RNA-DNA hybrids. The sequence is that of Ribonuclease H from Pseudomonas aeruginosa (strain LESB58).